The sequence spans 214 residues: Ribosomal RNA small subunit methyltransferase G (214 aa).

S-adenosyl-L-methionine is bound by residues G72, F77, 125–126 (VE), and R141.

This sequence belongs to the methyltransferase superfamily. RNA methyltransferase RsmG family.

The protein localises to the cytoplasm. The catalysed reaction is guanosine(527) in 16S rRNA + S-adenosyl-L-methionine = N(7)-methylguanosine(527) in 16S rRNA + S-adenosyl-L-homocysteine. Its function is as follows. Specifically methylates the N7 position of guanine in position 527 of 16S rRNA. The chain is Ribosomal RNA small subunit methyltransferase G from Sinorhizobium fredii (strain NBRC 101917 / NGR234).